The sequence spans 493 residues: Probable UTP--glucose-1-phosphate uridylyltransferase (493 aa).

UTP is bound by residues 105–108 (LTGK), Gln181, Gly211, and Asp242. 107-108 (GK) provides a ligand contact to substrate. Residue 240–242 (NVD) coordinates substrate.

It belongs to the UDPGP type 1 family.

The enzyme catalyses alpha-D-glucose 1-phosphate + UTP + H(+) = UDP-alpha-D-glucose + diphosphate. Plays a central role as a glucosyl donor in cellular metabolic pathways. This Saccharomyces cerevisiae (strain ATCC 204508 / S288c) (Baker's yeast) protein is Probable UTP--glucose-1-phosphate uridylyltransferase.